We begin with the raw amino-acid sequence, 306 residues long: MGEFQDVDKYISILKECKPLSESEVRDLCEKAREILSKESNVQPVRCPVTVCGDIHGQFHDLMELFKIGGNCPDTNYLFMGDYVDRGFYSVETVTLLVALKVRYKDRVTILRGNHESRQITQVYGFYDECLRKYGNPNVWKLFTDLFDYLPLTALIENQVFCLHGGLSPSIDTLDHIENLDRVQEVPHEGAMCDLLWSDPDDRLGFGYSPRGAGYTFGKDISEQFNHNNGLTLVARAHQLVMEGYNWCHDQNVVTIFSAPNYCYRCGNLAAIMEIDEKMKHTFLQFDPAPRRGEPHVTRRTPDYFL.

Asp54, His56, Asp82, and Asn114 together coordinate Mn(2+). The active-site Proton donor is the His115. Mn(2+) is bound by residues His164 and His238. At Leu306 the chain carries Leucine methyl ester.

This sequence belongs to the PPP phosphatase family. PP-2A subfamily. As to quaternary structure, PP2A consists of a trimeric holoenzyme, composed of a 37 kDa catalytic subunit (C subunit) and a 65 kDa constant regulatory subunit (A subunit), that associates with a variety of regulatory subunits (B subunit) such as phr2AB (B55) and psrA (B56 homolog). The trimer may partially dissociates into a core 'AC' dimer equally active compared to the trimer. Mn(2+) is required as a cofactor. In terms of processing, reversibly methyl esterified on Leu-306 by leucine carboxyl methyltransferase 1 (LCMT) and protein phosphatase methylesterase 1 (PPME1). Carboxyl methylation influences the affinity of the catalytic subunit for the different regulatory subunits, thereby modulating the PP2A holoenzyme's substrate specificity, enzyme activity and cellular localization.

It is found in the cytoplasm. It localises to the cytosol. The protein localises to the nucleus speckle. It carries out the reaction O-phospho-L-seryl-[protein] + H2O = L-seryl-[protein] + phosphate. The enzyme catalyses O-phospho-L-threonyl-[protein] + H2O = L-threonyl-[protein] + phosphate. In terms of biological role, plays a role in activating the myosin contractile function. Dephosphorylates threonine at 'Thr-1823', 'Thr-1833' and 'Thr-2029' in the C-terminal tail region of myosin II heavy chain (mhcA). Drives the assembly of dephosphorylated myosin II filaments to allow myosin recruitment into the cytoskeleton. In Dictyostelium discoideum (Social amoeba), this protein is Serine/threonine-protein phosphatase 2A catalytic subunit A (pho2a).